Reading from the N-terminus, the 56-residue chain is Large ribosomal subunit protein bL32 (56 aa).

This sequence belongs to the bacterial ribosomal protein bL32 family.

This chain is Large ribosomal subunit protein bL32, found in Synechococcus sp. (strain CC9311).